A 586-amino-acid chain; its full sequence is Retron Ec67 protein (586 aa).

Residues 29 to 262 (FLTNVLYRIG…SRQEVTGLTV (234 aa)) enclose the Reverse transcriptase domain. Residues Asp120, Asp201, and Asp202 each contribute to the Mg(2+) site.

This sequence belongs to the bacterial reverse transcriptase family.

It catalyses the reaction DNA(n) + a 2'-deoxyribonucleoside 5'-triphosphate = DNA(n+1) + diphosphate. The enzyme catalyses Endonucleolytic cleavage to 5'-phosphomonoester.. Its function is as follows. Reverse transcriptase (RT) component of antiviral defense system retron Ec67, minimally composed of a non-coding RNA (ncRNA) and this RT. Expression of these 2 elements confers protection against bacteriophage T5. At multiplicity of infection (MOI) of 0.02 cultures grow normally when infected with T5 without collapsing, at MOI 2 cultures enter growth stasis. Responsible for synthesis of msDNA-Ec67 (a branched molecule with RNA linked by a 2',5'-phosphodiester bond to ssDNA). The retron transcript serves as primer (from a conserved internal G residue) and template for the reaction, and codes for the RT. Can use other retrons as substrate (msDNA-Mx162 and msDNA-Ec86). Also able to synthesize DNA from a DNA template at least in vitro, although the enzyme is less active with a DNA template. The sequence is that of Retron Ec67 protein from Escherichia coli.